A 397-amino-acid polypeptide reads, in one-letter code: DNA-directed RNA polymerase subunit Rpo1C (397 aa).

This sequence belongs to the RNA polymerase beta' chain family. As to quaternary structure, part of the RNA polymerase complex.

It is found in the cytoplasm. It catalyses the reaction RNA(n) + a ribonucleoside 5'-triphosphate = RNA(n+1) + diphosphate. Functionally, DNA-dependent RNA polymerase (RNAP) catalyzes the transcription of DNA into RNA using the four ribonucleoside triphosphates as substrates. Forms part of the jaw domain. The polypeptide is DNA-directed RNA polymerase subunit Rpo1C (Methanococcus aeolicus (strain ATCC BAA-1280 / DSM 17508 / OCM 812 / Nankai-3)).